We begin with the raw amino-acid sequence, 688 residues long: DNA-directed RNA polymerase subunit beta' (688 aa).

Zn(2+)-binding residues include Cys69, Cys71, Cys87, and Cys90. Positions 497, 499, and 501 each coordinate Mg(2+).

The protein belongs to the RNA polymerase beta' chain family. RpoC1 subfamily. In plastids the minimal PEP RNA polymerase catalytic core is composed of four subunits: alpha, beta, beta', and beta''. When a (nuclear-encoded) sigma factor is associated with the core the holoenzyme is formed, which can initiate transcription. Mg(2+) is required as a cofactor. It depends on Zn(2+) as a cofactor.

The protein localises to the plastid. Its subcellular location is the chloroplast. The catalysed reaction is RNA(n) + a ribonucleoside 5'-triphosphate = RNA(n+1) + diphosphate. Its function is as follows. DNA-dependent RNA polymerase catalyzes the transcription of DNA into RNA using the four ribonucleoside triphosphates as substrates. This is DNA-directed RNA polymerase subunit beta' from Sinapis alba (White mustard).